The primary structure comprises 1311 residues: Zinc finger protein 521 (1311 aa).

Residues 1-10 (MSRRKQAKPR) show a composition bias toward basic residues. The disordered stretch occupies residues 1–37 (MSRRKQAKPRSLKDPNCKLEDKTEDGEALDCKKRPED). Residues 11–21 (SLKDPNCKLED) are compositionally biased toward basic and acidic residues. Residues 47–67 (HSCDSCLQVFESLSDITEHKI) form a C2H2-type 1; degenerate zinc finger. The disordered stretch occupies residues 81–108 (DPTCSWPASSPSSKDQTSPSHGEGCDFG). The segment covering 87–102 (PASSPSSKDQTSPSHG) has biased composition (low complexity). 7 consecutive C2H2-type zinc fingers follow at residues 118–140 (YPCQ…EQSH), 146–168 (FKCT…IKLH), 174–196 (YHCS…LKTH), 202–224 (YKCA…MQVH), 246–269 (QKCS…AECH), 281–304 (LQCV…EQVH), and 310–332 (NSCS…MDSH). The span at 349 to 358 (VGYTSVSSTT) shows a compositional bias: low complexity. Positions 349 to 397 (VGYTSVSSTTPDSNLSVDSSTMVEAAPPIPKSRGRKRAAQQTPDMTGPS) are disordered. Composition is skewed to polar residues over residues 359-370 (PDSNLSVDSSTM) and 387-397 (AQQTPDMTGPS). The C2H2-type 9; degenerate zinc-finger motif lies at 405–429 (YSCIYCNKQLFSSLAVLQIHLKTMH). C2H2-type zinc fingers lie at residues 437–460 (HICQ…KQVH), 477–500 (YQCN…RCSH), and 513–536 (FFCP…RQVH). Position 546 is a phosphoserine (serine 546). The segment at 560-585 (YSCSYCTNSPIFNSVLKLNKHIKENH) adopts a C2H2-type 13; atypical zinc-finger fold. A phosphoserine mark is found at serine 605 and serine 608. 7 consecutive C2H2-type zinc fingers follow at residues 634–656 (YICN…LKTH), 664–686 (LTCP…VTIH), 694–717 (YICE…LDMH), 722–745 (FRCT…AVKH), 752–775 (YRCT…KHNH), 783–805 (HKCI…ITTH), and 809–832 (YNCK…REKH). Residues 863 to 882 (TNSQESHNSHDGSEEDVDTS) form a disordered region. The segment at 886-908 (YGCDICGAAYTMETLLQNHQLRD) adopts a C2H2-type 21; degenerate zinc-finger fold. 3 consecutive C2H2-type zinc fingers follow at residues 930 to 952 (YKCN…MQTH), 959 to 981 (YMCP…KVTH), and 1020 to 1042 (FRCV…GTFH). The segment at 1065–1083 (YKCASCLKEFRSKQDLVKL) adopts a C2H2-type 25; degenerate zinc-finger fold. The C2H2-type 26 zinc finger occupies 1138-1161 (TRCSSCNVKFESESELQNHIQTIH). Lysine 1146 is covalently cross-linked (Glycyl lysine isopeptide (Lys-Gly) (interchain with G-Cter in SUMO2)). Over residues 1168–1178 (SNSTQLKTPQV) the composition is skewed to polar residues. Residues 1168-1188 (SNSTQLKTPQVSPMPRISPSQ) are disordered. 4 consecutive C2H2-type zinc fingers follow at residues 1195–1217 (YQCI…VANH), 1225–1247 (HECK…LIEH), 1256–1279 (FKCP…FSAH), and 1286–1309 (YDCT…MTQH).

Belongs to the krueppel C2H2-type zinc-finger protein family. As to quaternary structure, interacts with EBF1. Interacts with SMAD1 and SMAD4. In terms of tissue distribution, predominantly expressed in hematopoietic cells. Present in organs and tissues that contain stem and progenitor cells, myeloid and/or lymphoid: placenta, spleen, lymph nodes, thymus, bone marrow and fetal liver. Within the hematopoietic system, it is abundant in CD34(+) cells but undetectable in mature peripheral blood leukocytes, and its levels rapidly decrease during the differentiation of CD34(+) cells in response to hemopoietins.

It localises to the nucleus. In terms of biological role, transcription factor that can both act as an activator or a repressor depending on the context. Involved in BMP signaling and in the regulation of the immature compartment of the hematopoietic system. Associates with SMADs in response to BMP2 leading to activate transcription of BMP target genes. Acts as a transcriptional repressor via its interaction with EBF1, a transcription factor involved specification of B-cell lineage; this interaction preventing EBF1 to bind DNA and activate target genes. This is Zinc finger protein 521 (ZNF521) from Homo sapiens (Human).